The sequence spans 812 residues: Glycerol-3-phosphate acyltransferase (812 aa).

The HXXXXD motif motif lies at 308-313; sequence CHRSHM.

This sequence belongs to the GPAT/DAPAT family.

It is found in the cell inner membrane. It catalyses the reaction sn-glycerol 3-phosphate + an acyl-CoA = a 1-acyl-sn-glycero-3-phosphate + CoA. It participates in phospholipid metabolism; CDP-diacylglycerol biosynthesis; CDP-diacylglycerol from sn-glycerol 3-phosphate: step 1/3. The sequence is that of Glycerol-3-phosphate acyltransferase from Pseudoalteromonas translucida (strain TAC 125).